The primary structure comprises 489 residues: Probable cytosol aminopeptidase (489 aa).

Positions 255 and 260 each coordinate Mn(2+). K267 is an active-site residue. Positions 279, 339, and 341 each coordinate Mn(2+). Residue R343 is part of the active site.

This sequence belongs to the peptidase M17 family. It depends on Mn(2+) as a cofactor.

Its subcellular location is the cytoplasm. The catalysed reaction is Release of an N-terminal amino acid, Xaa-|-Yaa-, in which Xaa is preferably Leu, but may be other amino acids including Pro although not Arg or Lys, and Yaa may be Pro. Amino acid amides and methyl esters are also readily hydrolyzed, but rates on arylamides are exceedingly low.. It carries out the reaction Release of an N-terminal amino acid, preferentially leucine, but not glutamic or aspartic acids.. In terms of biological role, presumably involved in the processing and regular turnover of intracellular proteins. Catalyzes the removal of unsubstituted N-terminal amino acids from various peptides. This is Probable cytosol aminopeptidase from Synechococcus sp. (strain CC9605).